The following is a 1960-amino-acid chain: Intraflagellar transport protein 172 (1960 aa).

WD repeat units follow at residues 63-103 (SNKD…TDKK) and 328-367 (GFLP…YRYC). 3 TPR repeats span residues 1064-1098 (KADQ…QSYR), 1362-1395 (CDLF…QEIV), and 1397-1428 (MYLD…RSIR).

Belongs to the IFT172 family.

The protein localises to the cell projection. It is found in the cilium. The protein resides in the flagellum. Its subcellular location is the cytoplasm. It localises to the cytoskeleton. The protein localises to the flagellum axoneme. It is found in the flagellum basal body. Its function is as follows. Component of the intraflagellar transport complex B (IFT-B) involved in flagellar assembly. In Giardia intestinalis (strain ATCC 50803 / WB clone C6) (Giardia lamblia), this protein is Intraflagellar transport protein 172.